The chain runs to 216 residues: Ribonuclease HII (216 aa).

Residues Ala-28 to Glu-216 form the RNase H type-2 domain. A divalent metal cation contacts are provided by Asp-34, Glu-35, and Asp-126.

It belongs to the RNase HII family. The cofactor is Mn(2+). Mg(2+) is required as a cofactor.

The protein resides in the cytoplasm. It catalyses the reaction Endonucleolytic cleavage to 5'-phosphomonoester.. Endonuclease that specifically degrades the RNA of RNA-DNA hybrids. This chain is Ribonuclease HII, found in Geotalea uraniireducens (strain Rf4) (Geobacter uraniireducens).